We begin with the raw amino-acid sequence, 156 residues long: Small ribosomal subunit protein uS7 (156 aa).

This sequence belongs to the universal ribosomal protein uS7 family. Part of the 30S ribosomal subunit. Contacts proteins S9 and S11.

Functionally, one of the primary rRNA binding proteins, it binds directly to 16S rRNA where it nucleates assembly of the head domain of the 30S subunit. Is located at the subunit interface close to the decoding center, probably blocks exit of the E-site tRNA. The sequence is that of Small ribosomal subunit protein uS7 from Beijerinckia indica subsp. indica (strain ATCC 9039 / DSM 1715 / NCIMB 8712).